The sequence spans 181 residues: Ribosome maturation factor RimM (181 aa).

Positions 99–172 constitute a PRC barrel domain; the sequence is EDEFYQVDLI…FLIVDPMAAG (74 aa).

The protein belongs to the RimM family. In terms of assembly, binds ribosomal protein uS19.

The protein resides in the cytoplasm. An accessory protein needed during the final step in the assembly of 30S ribosomal subunit, possibly for assembly of the head region. Essential for efficient processing of 16S rRNA. May be needed both before and after RbfA during the maturation of 16S rRNA. It has affinity for free ribosomal 30S subunits but not for 70S ribosomes. The polypeptide is Ribosome maturation factor RimM (Bartonella tribocorum (strain CIP 105476 / IBS 506)).